A 90-amino-acid chain; its full sequence is DNA-binding protein HU (90 aa).

The residue at position 4 (threonine 4) is a Phosphothreonine. A disordered region spans residues 56 to 90 (AARKGRNPQTGEEMEIPASKVPAFKPGKALKDAVK).

Belongs to the bacterial histone-like protein family. Homodimer.

Histone-like DNA-binding protein which is capable of wrapping DNA to stabilize it, and thus to prevent its denaturation under extreme environmental conditions. This is DNA-binding protein HU (hup) from Geobacillus stearothermophilus (Bacillus stearothermophilus).